A 371-amino-acid chain; its full sequence is Histidinol-phosphate aminotransferase (371 aa).

Lys228 is subject to N6-(pyridoxal phosphate)lysine.

It belongs to the class-II pyridoxal-phosphate-dependent aminotransferase family. Histidinol-phosphate aminotransferase subfamily. In terms of assembly, homodimer. Requires pyridoxal 5'-phosphate as cofactor.

The catalysed reaction is L-histidinol phosphate + 2-oxoglutarate = 3-(imidazol-4-yl)-2-oxopropyl phosphate + L-glutamate. It participates in amino-acid biosynthesis; L-histidine biosynthesis; L-histidine from 5-phospho-alpha-D-ribose 1-diphosphate: step 7/9. The chain is Histidinol-phosphate aminotransferase from Thermosynechococcus vestitus (strain NIES-2133 / IAM M-273 / BP-1).